The primary structure comprises 267 residues: Energy-coupling factor transporter transmembrane protein EcfT (267 aa).

A run of 5 helical transmembrane segments spans residues 30-50 (FWYVVIIFFAKGPLTYLLLVA), 67-87 (WAGLKPLLWVIGLTIAIQVLF), 110-130 (ALVILARFILIVLASTVLTAT), 152-172 (VPVNQIAMMISIALRFIPTIM), and 247-267 (SIALAVVVIVSVLFFVARILL).

The protein belongs to the energy-coupling factor EcfT family. In terms of assembly, forms a stable energy-coupling factor (ECF) transporter complex composed of 2 membrane-embedded substrate-binding proteins (S component), 2 ATP-binding proteins (A component) and 2 transmembrane proteins (T component). May be able to interact with more than 1 S component at a time.

It is found in the cell membrane. Functionally, transmembrane (T) component of an energy-coupling factor (ECF) ABC-transporter complex. Unlike classic ABC transporters this ECF transporter provides the energy necessary to transport a number of different substrates. This chain is Energy-coupling factor transporter transmembrane protein EcfT, found in Limosilactobacillus fermentum (strain CECT 5716 / Lc40) (Lactobacillus fermentum).